Consider the following 175-residue polypeptide: 3-hydroxydecanoyl-[acyl-carrier-protein] dehydratase (175 aa).

The active site involves His-74.

The protein belongs to the thioester dehydratase family. FabA subfamily. In terms of assembly, homodimer.

The protein resides in the cytoplasm. It catalyses the reaction a (3R)-hydroxyacyl-[ACP] = a (2E)-enoyl-[ACP] + H2O. It carries out the reaction (3R)-hydroxydecanoyl-[ACP] = (2E)-decenoyl-[ACP] + H2O. The enzyme catalyses (2E)-decenoyl-[ACP] = (3Z)-decenoyl-[ACP]. It participates in lipid metabolism; fatty acid biosynthesis. Functionally, necessary for the introduction of cis unsaturation into fatty acids. Catalyzes the dehydration of (3R)-3-hydroxydecanoyl-ACP to E-(2)-decenoyl-ACP and then its isomerization to Z-(3)-decenoyl-ACP. Can catalyze the dehydratase reaction for beta-hydroxyacyl-ACPs with saturated chain lengths up to 16:0, being most active on intermediate chain length. This Alcanivorax borkumensis (strain ATCC 700651 / DSM 11573 / NCIMB 13689 / SK2) protein is 3-hydroxydecanoyl-[acyl-carrier-protein] dehydratase.